The sequence spans 259 residues: Phosphatidylglycerol--prolipoprotein diacylglyceryl transferase (259 aa).

4 consecutive transmembrane segments (helical) span residues 12-32 (LAIH…VYLA), 41-61 (ISSD…IVGA), 80-100 (IIAI…GALV), and 109-129 (VLNP…AQAI). A 1,2-diacyl-sn-glycero-3-phospho-(1'-sn-glycerol) is bound at residue R131. 3 helical membrane-spanning segments follow: residues 167–187 (IPTF…IMMW), 194–214 (LLDG…RLVI), and 226–246 (GIRI…IFVI).

Belongs to the Lgt family.

Its subcellular location is the cell membrane. It catalyses the reaction L-cysteinyl-[prolipoprotein] + a 1,2-diacyl-sn-glycero-3-phospho-(1'-sn-glycerol) = an S-1,2-diacyl-sn-glyceryl-L-cysteinyl-[prolipoprotein] + sn-glycerol 1-phosphate + H(+). It participates in protein modification; lipoprotein biosynthesis (diacylglyceryl transfer). Catalyzes the transfer of the diacylglyceryl group from phosphatidylglycerol to the sulfhydryl group of the N-terminal cysteine of a prolipoprotein, the first step in the formation of mature lipoproteins. The polypeptide is Phosphatidylglycerol--prolipoprotein diacylglyceryl transferase (Streptococcus pyogenes serotype M49 (strain NZ131)).